A 379-amino-acid polypeptide reads, in one-letter code: Class V chitinase (379 aa).

A signal peptide spans 1 to 24; sequence MSSTKLISLIVSITFFLTLQCSMA. The GH18 domain maps to 27-369; it reads VVKASYWFPA…RAASQAWDAT (343 aa). Glycine 99 is a binding site for chitin. The active-site Proton donor is glutamate 140. Chitin is bound at residue tyrosine 259. 2 N-linked (GlcNAc...) asparagine glycosylation sites follow: asparagine 307 and asparagine 327. Tryptophan 348 provides a ligand contact to chitin.

The protein belongs to the glycosyl hydrolase 18 family. Chitinase class V subfamily.

The enzyme catalyses Random endo-hydrolysis of N-acetyl-beta-D-glucosaminide (1-&gt;4)-beta-linkages in chitin and chitodextrins.. The catalysed reaction is Hydrolysis of N,N'-diacetylchitobiose from the non-reducing end of chitin and chitodextrins.. Its pathway is glycan degradation; chitin degradation. In terms of biological role, can hydrolyze glycol chitin and chitin oligosaccharides (e.g. N-acetylglucosamine) (GlcNAc)4, (GlcNAc)5 and (GlcNAc)6. Hydrolyzes N-acetylglucosamine oligomers producing dimers from the non-reducing end of the substrates. This is Class V chitinase from Arabidopsis thaliana (Mouse-ear cress).